The primary structure comprises 1031 residues: Putative glycine dehydrogenase (decarboxylating), mitochondrial (1031 aa).

The transit peptide at Met1–Leu49 directs the protein to the mitochondrion. The residue at position 783 (Lys783) is an N6-(pyridoxal phosphate)lysine.

This sequence belongs to the GcvP family. The cofactor is pyridoxal 5'-phosphate.

Its subcellular location is the mitochondrion. It catalyses the reaction N(6)-[(R)-lipoyl]-L-lysyl-[glycine-cleavage complex H protein] + glycine + H(+) = N(6)-[(R)-S(8)-aminomethyldihydrolipoyl]-L-lysyl-[glycine-cleavage complex H protein] + CO2. Functionally, the glycine cleavage system catalyzes the degradation of glycine. The P protein binds the alpha-amino group of glycine through its pyridoxal phosphate cofactor; CO(2) is released and the remaining methylamine moiety is then transferred to the lipoamide cofactor of the H protein. This is Putative glycine dehydrogenase (decarboxylating), mitochondrial (gcv2) from Schizosaccharomyces pombe (strain 972 / ATCC 24843) (Fission yeast).